The chain runs to 560 residues: Zinc finger protein 250 (560 aa).

The KRAB domain maps to 22 to 93 (LTFEDVAVLL…DRKGAKKSQG (72 aa)). Glycyl lysine isopeptide (Lys-Gly) (interchain with G-Cter in SUMO2) cross-links involve residues K125, K136, K148, and K162. A C2H2-type 1 zinc finger spans residues 199 to 221 (YMCVECGKCFGRSSHLLQHQRIH). Residue K225 forms a Glycyl lysine isopeptide (Lys-Gly) (interchain with G-Cter in SUMO2) linkage. C2H2-type zinc fingers lie at residues 227–249 (YVCS…RRIH), 255–277 (YECN…HKIH), 283–305 (HECL…QRIH), 311–333 (YVCP…QRVH), 339–361 (HRCN…QRIH), 367–389 (YTCS…HNVH), and 395–417 (YECS…ERIH). K421 is covalently cross-linked (Glycyl lysine isopeptide (Lys-Gly) (interchain with G-Cter in SUMO2)). C2H2-type zinc fingers lie at residues 423–445 (YACY…QRVH), 451–473 (YVCG…ERIH), 479–501 (FQCT…LRTH), 507–529 (YECN…QRIH), and 535–557 (YECG…QKVH).

This sequence belongs to the krueppel C2H2-type zinc-finger protein family.

It is found in the nucleus. In terms of biological role, may be involved in transcriptional regulation. The sequence is that of Zinc finger protein 250 (ZNF250) from Homo sapiens (Human).